The chain runs to 1209 residues: Putative lysine-specific demethylase JMJ16 (1209 aa).

A JmjN domain is found at 146-187; sequence APVFYPSEEEFEDTLNYIAKIRPEAEKYGICRIVPPPSWKPP. Residues 217 to 224 carry the Nuclear localization signal motif; the sequence is MKKISKLP. Residues 361–527 form the JmjC domain; sequence KYAKSGWNLN…HGQIAIELYC (167 aa). 3 residues coordinate Fe cation: His407, Glu409, and His495. Zn(2+)-binding residues include Cys617, Cys620, Cys631, Cys633, Cys640, His643, Cys648, and Cys650. The C5HC2 zinc finger occupies 617–667; that stretch reads CCICFFDLHLSAAGCRCSPEKYSCLTHVKELCSCPWVTKYFLFRYDIDELN. Positions 872-900 are disordered; it reads DTRNTISLPTNDQKTMRRDVPSSTSHAEV. Polar residues predominate over residues 875–884; that stretch reads NTISLPTNDQ. One can recognise an FYR N-terminal domain in the interval 974–1032; the sequence is VVRRINCNVEPLSYGCVLSGKSWCSRRAIFPKGFRSRVKYINILDPTNMCFYISEILDA. Positions 1034–1124 constitute an FYR C-terminal domain; sequence RNSPLFMVYL…RVCTDYWDSR (91 aa).

This sequence belongs to the JARID1 histone demethylase family. In terms of assembly, interacts with MMD1 in the nucleus of male meiocytes, especially on pachytene chromosomes. Fe(2+) serves as cofactor. In terms of tissue distribution, confined to inflorescences.

It localises to the nucleus. The enzyme catalyses N(6),N(6),N(6)-trimethyl-L-lysyl(4)-[histone H3] + 2-oxoglutarate + O2 = N(6),N(6)-dimethyl-L-lysyl(4)-[histone H3] + formaldehyde + succinate + CO2. It catalyses the reaction N(6),N(6)-dimethyl-L-lysyl(4)-[histone H3] + 2-oxoglutarate + O2 = N(6)-methyl-L-lysyl(4)-[histone H3] + formaldehyde + succinate + CO2. It carries out the reaction N(6)-methyl-L-lysyl(4)-[histone H3] + 2-oxoglutarate + O2 = L-lysyl(4)-[histone H3] + formaldehyde + succinate + CO2. In terms of biological role, functions as a histone H3 'Lys-4' (H3K4me) demethylase involved in the negative regulation of gene expression. Active on H3K4me1, H3K4me2 and H3K4me3. Not active on mono-, di- and trimethylated H3K9, H3K27 and H3K36 in somatic cells. However, also active on H3K9 when in complex with MMD1, a meiocyte-specific histone reader. Together with MMD1, promotes gene expression in male meiocytes in an H3K9me3-dependent manner, and contributes to meiotic chromosome condensation by triggering some condensin promoters (e.g. CAP-D3 and CAP-H). Together with JMJ14 and JMJ17, required for plant growth and development. Represses leaf senescence in an age-dependent manner by demethylating H3K4me3 activating histone marks at senescence-associated genes (SAGs) loci, including WRKY53 and SAG201, thus preventing their premature expression. The chain is Putative lysine-specific demethylase JMJ16 from Arabidopsis thaliana (Mouse-ear cress).